Here is a 419-residue protein sequence, read N- to C-terminus: Aminoacyltransferase FemB (419 aa).

This sequence belongs to the FemABX family. In terms of assembly, homodimer. Interacts with FemA.

It is found in the cytoplasm. The catalysed reaction is MurNAc-L-Ala-D-isoglutaminyl-L-Lys-(N(6)-tri-Gly)-D-Ala-D-Ala-diphospho-di-trans,octa-cis-undecaprenyl-GlcNAc + 2 glycyl-tRNA(Gly) = MurNAc-L-Ala-D-isoglutaminyl-L-Lys-(N(6)-penta-Gly)-D-Ala-D-Ala-diphospho-di-trans,octa-cis-undecaprenyl-GlcNAc + 2 tRNA(Gly) + 2 H(+). Catalyzes the formation of the pentaglycine interpeptide bridge, which is characteristic of the S.aureus peptidoglycan. Adds glycines 4 and 5 of the pentaglycine bridge, using glycyl-tRNA(Gly) as donor. Involved in resistance to methicillin. The sequence is that of Aminoacyltransferase FemB (femB) from Staphylococcus aureus (strain MW2).